Reading from the N-terminus, the 137-residue chain is MEKKTIVLGVIGSDCHAVGNKILDHSFTNAGFNVVNIGVLSSQEDFINAAIETKADLICVSSLYGQGEIDCKGLREKCDEAGLKGIKLFVGGNIVVGKQNWPDVEQRFKAMGFDRVYPPGTSPETTIADMKEVLGVE.

In terms of domain architecture, B12-binding spans 3 to 137; that stretch reads KKTIVLGVIG…ADMKEVLGVE (135 aa). Adenosylcob(III)alamin-binding positions include 13-17, H16, 61-63, and 93-97; these read SDCHA, SSL, and NIVVG.

Belongs to the methylaspartate mutase GlmS subunit family. As to quaternary structure, heterotetramer composed of 2 epsilon subunits (GlmE) and 2 sigma subunits (GlmS). GlmE exists as a homodimer and GlmS as a monomer. Requires adenosylcob(III)alamin as cofactor.

The enzyme catalyses (2S,3S)-3-methyl-L-aspartate = L-glutamate. The protein operates within amino-acid degradation; L-glutamate degradation via mesaconate pathway; acetate and pyruvate from L-glutamate: step 1/4. Catalyzes the carbon skeleton rearrangement of L-glutamate to L-threo-3-methylaspartate ((2S,3S)-3-methylaspartate). The protein is Glutamate mutase sigma subunit of Clostridium tetanomorphum.